The following is a 173-amino-acid chain: Dual-action ribosomal maturation protein DarP (173 aa).

This sequence belongs to the DarP family.

It is found in the cytoplasm. Member of a network of 50S ribosomal subunit biogenesis factors which assembles along the 30S-50S interface, preventing incorrect 23S rRNA structures from forming. Promotes peptidyl transferase center (PTC) maturation. In Pseudomonas putida (strain ATCC 700007 / DSM 6899 / JCM 31910 / BCRC 17059 / LMG 24140 / F1), this protein is Dual-action ribosomal maturation protein DarP.